The chain runs to 131 residues: Fluoride-specific ion channel FluC 1 (131 aa).

3 consecutive transmembrane segments (helical) span residues 38 to 58 (FPLS…IAMM), 69 to 89 (TVMM…TALN), and 108 to 128 (IATV…ALLA). Na(+) contacts are provided by Gly-79 and Ser-82.

Belongs to the fluoride channel Fluc/FEX (TC 1.A.43) family.

It localises to the cell membrane. It carries out the reaction fluoride(in) = fluoride(out). Na(+) is not transported, but it plays an essential structural role and its presence is essential for fluoride channel function. Functionally, fluoride-specific ion channel. Important for reducing fluoride concentration in the cell, thus reducing its toxicity. The sequence is that of Fluoride-specific ion channel FluC 1 from Bifidobacterium longum (strain NCC 2705).